The chain runs to 149 residues: Transcriptional repressor NrdR (149 aa).

Residues cysteine 3–cysteine 34 fold into a zinc finger. The 91-residue stretch at proline 49 to glutamate 139 folds into the ATP-cone domain.

This sequence belongs to the NrdR family. It depends on Zn(2+) as a cofactor.

Its function is as follows. Negatively regulates transcription of bacterial ribonucleotide reductase nrd genes and operons by binding to NrdR-boxes. This is Transcriptional repressor NrdR from Enterobacter sp. (strain 638).